We begin with the raw amino-acid sequence, 180 residues long: MSRQANRGTESKKMSSELFTLTYGALVTQLCKDYENDEDVNKQLDKMGFNIGVRLIEDFLARSNVGRCHDFRETADVIAKVAFKMYLGITPSITNWSPAGDEFSLILENNPLVDFVELPDNHSSLIYSNLLCGVLRGALEMVQMAVEAKFVQDTLKGDGVTEIRMRFIRRIEDNLPAGEE.

Residue Cys-68 is the site of S-palmitoyl cysteine attachment.

The protein belongs to the TRAPP small subunits family. BET3 subfamily. In terms of assembly, homodimer. Component of the multisubunit transport protein particle (TRAPP) complex, which includes at least TRAPPC2, TRAPPC2L, TRAPPC3, TRAPPC3L, TRAPPC4, TRAPPC5, TRAPPC8, TRAPPC9, TRAPPC10, TRAPPC11 and TRAPPC12. Heterodimer with TRAPPC6A. The heterodimer TRAPPC3-TRAPPC6A interacts with TRAPPC2L. Heterodimer with TRAPPC6b. The heterodimer TRAPPC6B-TRAPPC3 interacts with TRAPPC1 likely providing a core for TRAPP complex formation.

The protein resides in the golgi apparatus. It is found in the cis-Golgi network. It localises to the endoplasmic reticulum. May play a role in vesicular transport from endoplasmic reticulum to Golgi. The polypeptide is Trafficking protein particle complex subunit 3 (Homo sapiens (Human)).